We begin with the raw amino-acid sequence, 561 residues long: Potassium-transporting ATPase potassium-binding subunit (561 aa).

The next 10 membrane-spanning stretches (helical) occupy residues 4-24 (IVMQ…PLGI), 65-85 (AVSV…VLML), 133-153 (IGLT…LFAV), 177-197 (LYIL…QGVV), 253-273 (FTNL…VVMF), 285-305 (AIMT…TISE), 380-400 (GLYG…LLVG), 417-437 (MVCL…AVAV), 484-504 (MVGA…ALYL), and 528-548 (FIGL…LPAL).

The protein belongs to the KdpA family. As to quaternary structure, the system is composed of three essential subunits: KdpA, KdpB and KdpC.

It is found in the cell membrane. Its function is as follows. Part of the high-affinity ATP-driven potassium transport (or Kdp) system, which catalyzes the hydrolysis of ATP coupled with the electrogenic transport of potassium into the cytoplasm. This subunit binds the extracellular potassium ions and delivers the ions to the membrane domain of KdpB through an intramembrane tunnel. This Listeria monocytogenes serovar 1/2a (strain ATCC BAA-679 / EGD-e) protein is Potassium-transporting ATPase potassium-binding subunit.